The primary structure comprises 400 residues: Delta(12) fatty acid desaturase (400 aa).

Residues 91 to 111 (LAWPAYWIMQGIVCTGIWVLA) traverse the membrane as a helical segment. The Histidine box-1 signature appears at 112–116 (HECGH). The short motif at 148–152 (HSKHH) is the Histidine box-2 element. 3 consecutive transmembrane segments (helical) span residues 199–219 (IVTL…YLIM), 245–265 (FFDI…LIYA), and 277–297 (YYII…FLQH). The Histidine box-3 signature appears at 339 to 343 (HVAHH).

This sequence belongs to the fatty acid desaturase type 1 family.

The protein resides in the membrane. The catalysed reaction is (9Z)-octadecenoyl-CoA + 2 Fe(II)-[cytochrome b5] + O2 + 2 H(+) = (9Z,12Z)-octadecadienoyl-CoA + 2 Fe(III)-[cytochrome b5] + 2 H2O. It catalyses the reaction (9Z)-hexadecenoyl-CoA + 2 Fe(II)-[cytochrome b5] + O2 + 2 H(+) = (9Z,12Z)-hexadecadienoyl-CoA + 2 Fe(III)-[cytochrome b5] + 2 H2O. The protein operates within lipid metabolism; polyunsaturated fatty acid biosynthesis. Functionally, catalyzes the desaturation of oleic acid (Delta(9)-18:1) to linoleic acid (Delta(9), Delta(12)-18:2). The chain is Delta(12) fatty acid desaturase from Mortierella isabellina (Filamentous fungus).